Here is a 443-residue protein sequence, read N- to C-terminus: Chromosomal replication initiator protein DnaA (443 aa).

The interval 1-80 (MTSQFASLWQ…LGESVEVRFF (80 aa)) is domain I, interacts with DnaA modulators. The domain II stretch occupies residues 80–104 (FTPSADSRRSEPSRRPVATEESSPP). The tract at residues 83–105 (SADSRRSEPSRRPVATEESSPPL) is disordered. Residues 85 to 97 (DSRRSEPSRRPVA) are compositionally biased toward basic and acidic residues. Residues 105–321 (LLNPKYTFDT…GALNRVIAYA (217 aa)) form a domain III, AAA+ region region. ATP-binding residues include Gly149, Gly151, Lys152, and Thr153. The domain IV, binds dsDNA stretch occupies residues 322-443 (NLSGKSLTSE…QVLKEKIQRA (122 aa)).

Belongs to the DnaA family. As to quaternary structure, oligomerizes as a right-handed, spiral filament on DNA at oriC.

It localises to the cytoplasm. In terms of biological role, plays an essential role in the initiation and regulation of chromosomal replication. ATP-DnaA binds to the origin of replication (oriC) to initiate formation of the DNA replication initiation complex once per cell cycle. Binds the DnaA box (a 9 base pair repeat at the origin) and separates the double-stranded (ds)DNA. Forms a right-handed helical filament on oriC DNA; dsDNA binds to the exterior of the filament while single-stranded (ss)DNA is stabiized in the filament's interior. The ATP-DnaA-oriC complex binds and stabilizes one strand of the AT-rich DNA unwinding element (DUE), permitting loading of DNA polymerase. After initiation quickly degrades to an ADP-DnaA complex that is not apt for DNA replication. Binds acidic phospholipids. This chain is Chromosomal replication initiator protein DnaA, found in Heliobacterium modesticaldum (strain ATCC 51547 / Ice1).